Reading from the N-terminus, the 712-residue chain is MDALIRAGSEIDAHDTALRGPLPPEAPLAMPEQSFAAAPDREADRAAAAAPNEWRRLAIMLATAALTCAGGYEMYQVLQVGGVTILEGIVLALFAALFAWVALSFVSALAGFVALLSGWHDDLGVAADGPLPAISNRIAMLLPIYNEQPQAVFARLQATRESVELTGHGAQFDWFILSDTTDPAVWIAEEKCYLALASSGERLFYRHRQFNHARKSGNIEDWVKRFGAGYDCIVILDADSMMTGEALVRLAAAMQRHPDVGLIQTLPIVVKARTLFARLQQFAGRMYGPMIASGIAWWHGSESNYWGHNAIIRVAAFAACTGLPSLPGRKPFGGHILSHDFVEAALLRRAGWRIHMAPTLPGSYEECPPSLLDFAARDRRWCQGNLQHAKLLKARGLHWVSRLHFLTGIGSYITAPMWLAFLVAGILISLQAQFVRPEYFPKGYSLFPDWPAQDPVRAAWVFAGTMGLLMMPKLLALILVVIRRESRRGFGGAARAAAGVVTETLISSLTAPVMMIFQSTAIAEILLGRDAGWNVQHRGDGAIPLREIARRYAAPSWLGAVMAVSALLVSWPLLLWMMPVILGLVLAIPVALLTSRTLAKHRAGAMLATPEDAEPPILSRAGEIAATLRDASPAEDPLLQLRNDPVLRELHFAGLAHQPARPRGRVDPALALARAQIDDAACIAEVVDWLDPREKHAVMGSRDTLQRIMRMP.

6 consecutive transmembrane segments (helical) span residues 57 to 77 (LAIM…MYQV), 89 to 109 (IVLA…VSAL), 408 to 428 (GIGS…GILI), 462 to 482 (FAGT…LVVI), 552 to 572 (YAAP…VSWP), and 573 to 593 (LLLW…VALL).

This sequence belongs to the glycosyltransferase 2 family. OpgH subfamily.

The protein resides in the cell inner membrane. It participates in glycan metabolism; osmoregulated periplasmic glucan (OPG) biosynthesis. Its function is as follows. Involved in the biosynthesis of osmoregulated periplasmic glucans (OPGs). The polypeptide is Glucans biosynthesis glucosyltransferase H (Rhodopseudomonas palustris (strain BisA53)).